The primary structure comprises 491 residues: Glutamyl-tRNA(Gln) amidotransferase subunit A (491 aa).

Active-site charge relay system residues include Lys-76 and Ser-154. Ser-178 acts as the Acyl-ester intermediate in catalysis.

This sequence belongs to the amidase family. GatA subfamily. Heterotrimer of A, B and C subunits.

It catalyses the reaction L-glutamyl-tRNA(Gln) + L-glutamine + ATP + H2O = L-glutaminyl-tRNA(Gln) + L-glutamate + ADP + phosphate + H(+). Allows the formation of correctly charged Gln-tRNA(Gln) through the transamidation of misacylated Glu-tRNA(Gln) in organisms which lack glutaminyl-tRNA synthetase. The reaction takes place in the presence of glutamine and ATP through an activated gamma-phospho-Glu-tRNA(Gln). The chain is Glutamyl-tRNA(Gln) amidotransferase subunit A from Cereibacter sphaeroides (strain KD131 / KCTC 12085) (Rhodobacter sphaeroides).